We begin with the raw amino-acid sequence, 81 residues long: ATP synthase subunit c (81 aa).

Transmembrane regions (helical) follow at residues 7–27 (AASVVAAGLAVGLAAIGPGIG) and 57–77 (LAFMESLTIYGLVVALVLLFA).

This sequence belongs to the ATPase C chain family. F-type ATPases have 2 components, F(1) - the catalytic core - and F(0) - the membrane proton channel. F(1) has five subunits: alpha(3), beta(3), gamma(1), delta(1), epsilon(1). F(0) has four main subunits: a(1), b(1), b'(1) and c(10-14). The alpha and beta chains form an alternating ring which encloses part of the gamma chain. F(1) is attached to F(0) by a central stalk formed by the gamma and epsilon chains, while a peripheral stalk is formed by the delta, b and b' chains.

It localises to the cellular thylakoid membrane. Its function is as follows. F(1)F(0) ATP synthase produces ATP from ADP in the presence of a proton or sodium gradient. F-type ATPases consist of two structural domains, F(1) containing the extramembraneous catalytic core and F(0) containing the membrane proton channel, linked together by a central stalk and a peripheral stalk. During catalysis, ATP synthesis in the catalytic domain of F(1) is coupled via a rotary mechanism of the central stalk subunits to proton translocation. Key component of the F(0) channel; it plays a direct role in translocation across the membrane. A homomeric c-ring of between 10-14 subunits forms the central stalk rotor element with the F(1) delta and epsilon subunits. This Synechococcus sp. (strain CC9902) protein is ATP synthase subunit c.